Here is a 2890-residue protein sequence, read N- to C-terminus: Bifunctional DNA-directed RNA polymerase subunit beta-beta' (2890 aa).

Positions methionine 1–aspartate 1377 are DNA-directed RNA polymerase subunit beta. The interval proline 1384 to phenylalanine 2890 is DNA-directed RNA polymerase subunit beta'. Zn(2+)-binding residues include cysteine 1449, cysteine 1451, cysteine 1465, and cysteine 1468. The Mg(2+) site is built by aspartate 1849, aspartate 1851, and aspartate 1853. 4 residues coordinate Zn(2+): cysteine 2179, cysteine 2253, cysteine 2260, and cysteine 2263.

The protein in the N-terminal section; belongs to the RNA polymerase beta chain family. It in the C-terminal section; belongs to the RNA polymerase beta' chain family. The RNAP catalytic core consists of 2 alpha, 1 beta/beta' and 1 omega subunit. When a sigma factor is associated with the core the holoenzyme is formed, which can initiate transcription. Requires Mg(2+) as cofactor. Zn(2+) is required as a cofactor.

The enzyme catalyses RNA(n) + a ribonucleoside 5'-triphosphate = RNA(n+1) + diphosphate. In terms of biological role, DNA-dependent RNA polymerase catalyzes the transcription of DNA into RNA using the four ribonucleoside triphosphates as substrates. The polypeptide is Bifunctional DNA-directed RNA polymerase subunit beta-beta' (rpoBC) (Helicobacter pylori (strain J99 / ATCC 700824) (Campylobacter pylori J99)).